Reading from the N-terminus, the 197-residue chain is Peptide deformylase (197 aa).

Fe cation is bound by residues cysteine 106 and histidine 148. The active site involves glutamate 149. Histidine 152 is a binding site for Fe cation.

This sequence belongs to the polypeptide deformylase family. Fe(2+) is required as a cofactor.

It catalyses the reaction N-terminal N-formyl-L-methionyl-[peptide] + H2O = N-terminal L-methionyl-[peptide] + formate. In terms of biological role, removes the formyl group from the N-terminal Met of newly synthesized proteins. Requires at least a dipeptide for an efficient rate of reaction. N-terminal L-methionine is a prerequisite for activity but the enzyme has broad specificity at other positions. The protein is Peptide deformylase of Mycobacteroides abscessus (strain ATCC 19977 / DSM 44196 / CCUG 20993 / CIP 104536 / JCM 13569 / NCTC 13031 / TMC 1543 / L948) (Mycobacterium abscessus).